Consider the following 276-residue polypeptide: UPF0761 membrane protein APL_1950 (276 aa).

7 consecutive transmembrane segments (helical) span residues 33-53 (TLAIVPLVMVVFSIFTAFPIF), 90-110 (MGIVSTIGLVVVALMLIQSID), 125-145 (IFISFLLYAVILFIAPLLAGG), 147-167 (IAISSYIFSMAIFNENGLLSF), 171-191 (LLQYTPFLLIWLLFTTVYWLV), 203-223 (LGAIVAAIFFTLGKQAFVWYI), and 239-259 (LPIMLLWIHLSWQVVLFGGLI).

This sequence belongs to the UPF0761 family.

The protein resides in the cell inner membrane. The chain is UPF0761 membrane protein APL_1950 from Actinobacillus pleuropneumoniae serotype 5b (strain L20).